A 73-amino-acid chain; its full sequence is Beta-defensin 108B (73 aa).

The first 22 residues, 1–22 (MRIAVLLFAIFFFMSQVLPARG), serve as a signal peptide directing secretion. Cystine bridges form between C28–C55, C35–C49, and C39–C56.

The protein belongs to the beta-defensin family. Specifically expressed in testis. Low expression is detected also in liver.

Its subcellular location is the secreted. Its function is as follows. Has antibacterial activity. The sequence is that of Beta-defensin 108B (DEFB108B) from Homo sapiens (Human).